The chain runs to 438 residues: ATP-dependent RNA helicase sub2 (438 aa).

The segment covering 23–36 (TTAAPAANGAPAKT) has biased composition (low complexity). A disordered region spans residues 23-42 (TTAAPAANGAPAKTGDLTVT). The short motif at 58–86 (TGFRDFLLKGELLRAITDCGFEHPSEVCI) is the Q motif element. The 176-residue stretch at 86-261 (IPTAILNVDV…KKFMRNPLEV (176 aa)) folds into the Helicase ATP-binding domain. 99 to 106 (AKSGLGKT) is an ATP binding site. The DEAD box signature appears at 208 to 211 (DECD). Positions 289 to 434 (KLNDLLDNLE…EYPEGGVDSS (146 aa)) constitute a Helicase C-terminal domain.

It belongs to the DEAD box helicase family. DECD subfamily.

Its subcellular location is the nucleus. It carries out the reaction ATP + H2O = ADP + phosphate + H(+). ATP-binding RNA helicase involved in transcription elongation and required for the export of mRNA out of the nucleus. SUB2 also plays a role in pre-mRNA splicing and spliceosome assembly. May be involved in rDNA and telomeric silencing, and maintenance of genome integrity. This Aspergillus terreus (strain NIH 2624 / FGSC A1156) protein is ATP-dependent RNA helicase sub2 (sub2).